Reading from the N-terminus, the 220-residue chain is Ribonuclease P protein subunit p29 (220 aa).

Ser10 carries the post-translational modification Phosphoserine.

Belongs to the eukaryotic/archaeal RNase P protein component 1 family. As to quaternary structure, component of nuclear RNase P and RNase MRP ribonucleoproteins. RNase P consists of a catalytic RNA moiety and 10 different protein chains; POP1, POP4, POP5, POP7, RPP14, RPP21, RPP25, RPP30, RPP38 and RPP40. Within the RNase P complex, POP1, POP7 and RPP25 form the 'finger' subcomplex, POP5, RPP14, RPP40 and homodimeric RPP30 form the 'palm' subcomplex, and RPP21, POP4 and RPP38 form the 'wrist' subcomplex. All subunits of the RNase P complex interact with the catalytic RNA. Several subunits of RNase P are also part of the RNase MRP complex. RNase MRP consists of a catalytic RNA moiety and about 8 protein subunits; POP1, POP7, RPP25, RPP30, RPP38, RPP40 and possibly also POP4 and POP5.

It localises to the nucleus. The protein localises to the nucleolus. Functionally, component of ribonuclease P, a ribonucleoprotein complex that generates mature tRNA molecules by cleaving their 5'-ends. The sequence is that of Ribonuclease P protein subunit p29 (POP4) from Pongo abelii (Sumatran orangutan).